Consider the following 272-residue polypeptide: Alcohol dehydrogenase-related 31 kDa protein (272 aa).

Position 11–34 (11–34 (YVADCGGIALETSKVLMTKNIAKL)) interacts with NAD(+). S139 serves as a coordination point for substrate. Y152 functions as the Proton acceptor in the catalytic mechanism.

Belongs to the short-chain dehydrogenases/reductases (SDR) family.

The chain is Alcohol dehydrogenase-related 31 kDa protein (Adhr) from Drosophila mauritiana (Fruit fly).